The sequence spans 388 residues: Na(+)/H(+) antiporter NhaA (388 aa).

Transmembrane regions (helical) follow at residues 14–34 (GGIILIIAAALAMLMANMGAT), 59–79 (MLLWINDALMAVFFLLIGLEV), 95–115 (VFPVIAAIGGMIVPALLYLAF), 125–145 (GWAIPAATDIAFALGVLALLG), 154–174 (IFLMALAIIDDLGAIIIIALF), 179–199 (LSIVSLGVAAFAIVVLALLNL), 219–239 (VLKSGVHATLAGVIVGFFIPL), 254–274 (ILHPWVAYLILPLFAFANAGV), 292–312 (IIAGLLIGKPLGISLFCWLAL), 328–348 (IMAVGILCGIGFTMSIFIASL), and 356–376 (ALINWAKLGILIGSLLSAVVG).

This sequence belongs to the NhaA Na(+)/H(+) (TC 2.A.33) antiporter family.

Its subcellular location is the cell inner membrane. The catalysed reaction is Na(+)(in) + 2 H(+)(out) = Na(+)(out) + 2 H(+)(in). Functionally, na(+)/H(+) antiporter that extrudes sodium in exchange for external protons. The polypeptide is Na(+)/H(+) antiporter NhaA (Salmonella arizonae (strain ATCC BAA-731 / CDC346-86 / RSK2980)).